We begin with the raw amino-acid sequence, 368 residues long: tRNA(Met) cytidine acetate ligase (368 aa).

ATP is bound by residues 7-20 (IAEFNPFHNGHKYL), Gly-96, Asn-152, and Arg-175.

It belongs to the TmcAL family.

The protein localises to the cytoplasm. The enzyme catalyses cytidine(34) in elongator tRNA(Met) + acetate + ATP = N(4)-acetylcytidine(34) in elongator tRNA(Met) + AMP + diphosphate. In terms of biological role, catalyzes the formation of N(4)-acetylcytidine (ac(4)C) at the wobble position of elongator tRNA(Met), using acetate and ATP as substrates. First activates an acetate ion to form acetyladenylate (Ac-AMP) and then transfers the acetyl group to tRNA to form ac(4)C34. The polypeptide is tRNA(Met) cytidine acetate ligase (Streptococcus pyogenes serotype M49 (strain NZ131)).